A 644-amino-acid chain; its full sequence is Macrolide export ATP-binding/permease protein MacB (644 aa).

Residues 1-268 are Cytoplasmic-facing; it reads MNIIEIKQLN…SAIVAHKMRS (268 aa). One can recognise an ABC transporter domain in the interval 4–242; it reads IEIKQLNRYF…VKNPSVFKGR (239 aa). 40–47 contributes to the ATP binding site; it reads GQSGSGKS. The helical transmembrane segment at 269 to 289 threads the bilayer; sequence LLTMLGIIIGITSVVSVVALG. Topologically, residues 290-523 are periplasmic; the sequence is NGSQQKILEN…TGTMKLLISS (234 aa). Residues 524-544 traverse the membrane as a helical segment; that stretch reads IAFISLIVGGIGVMNIMLVSV. Over 545 to 573 the chain is Cytoplasmic; the sequence is TERTKEIGVRMAIGARQINILQQFLIEAV. The chain crosses the membrane as a helical span at residues 574–594; sequence LICLIGGVAGILLSVLIGVLF. At 595-607 the chain is on the periplasmic side; the sequence is NSFITDFSMDFST. Residues 608–628 form a helical membrane-spanning segment; that stretch reads ASIVTAVLFSTLIGVLFGYMP. Residues 629–644 lie on the Cytoplasmic side of the membrane; sequence AKKAAELNPITALAQE.

Belongs to the ABC transporter superfamily. Macrolide exporter (TC 3.A.1.122) family. Homodimer. Part of the tripartite efflux system MacAB-TdeA, which is composed of an inner membrane transporter, MacB, a periplasmic membrane fusion protein, MacA, and an outer membrane component, TdeA. The complex forms a large protein conduit and can translocate molecules across both the inner and outer membranes. Interacts with MacA.

The protein resides in the cell inner membrane. Functionally, part of the tripartite efflux system MacAB-TdeA. MacB is a non-canonical ABC transporter that contains transmembrane domains (TMD), which form a pore in the inner membrane, and an ATP-binding domain (NBD), which is responsible for energy generation. Confers resistance against macrolides. The chain is Macrolide export ATP-binding/permease protein MacB from Aggregatibacter actinomycetemcomitans (Actinobacillus actinomycetemcomitans).